A 405-amino-acid chain; its full sequence is Serpin I2 (405 aa).

The signal sequence occupies residues 1–18 (MNKTILWSFLLFFSGSQT). N-linked (GlcNAc...) asparagine glycosylation occurs at asparagine 306.

This sequence belongs to the serpin family. In terms of tissue distribution, expressed in pancreas.

Its subcellular location is the secreted. The protein is Serpin I2 (Serpini2) of Mus musculus (Mouse).